Consider the following 132-residue polypeptide: Ubiquinol-cytochrome c reductase complex assembly factor 4 (132 aa).

The first 15 residues, 1–15, serve as a signal peptide directing secretion; it reads MNRVLCAPAAGAVRA. Over 16–78 the chain is Mitochondrial matrix; sequence LRLIGRTSRS…GKGHQRPWWK (63 aa). A disordered region spans residues 24 to 73; it reads RSLHPLPGSRDRAHPAAEEQDDPDRPTEFSSSKANPRRWSVGHSMGKGHQ. The span at 32–50 shows a compositional bias: basic and acidic residues; that stretch reads SRDRAHPAAEEQDDPDRPT. The helical transmembrane segment at 79–95 threads the bilayer; it reads VLPLSCFLVALIIWCYL. Residues 96–132 lie on the Mitochondrial intermembrane side of the membrane; sequence REESEADQWLRQVWGEVPEPSDRSEEPETPAAYRART. A disordered region spans residues 110-132; sequence GEVPEPSDRSEEPETPAAYRART.

It belongs to the UQCC4 family. As to quaternary structure, forms a complex, named COMB/coordinator of mitochondrial CYTB biogenesis, composed of UQCC1, UQCC2, UQCC4, UQCC5 and UQCC6; stabilizes nascent cytochrome b/MT-CYB and promotes its membrane insertion. Forms a complex, named COMA, composed of UQCC1, UQCC2 and UQCC4; activates MT-CYB translation. Forms a complex, named COMC, composed of UQCC1, UQCC2; UQCC3 and UQCC4; mediates MT-CYB hemylation and association with the first nuclear-encoded complex III subunit UQCRQ. Complexes COMA and COMB are bound to the mitochondrion inner membrane by UQCC4.

The protein localises to the mitochondrion inner membrane. Functionally, required for the assembly and stability of the mitochondrial ubiquinol-cytochrome c reductase complex (complex III (CIII) or cytochrome b-c1 complex), a multisubunit transmembrane complex that is part of the mitochondrial electron transport chain (ETC) which drives oxidative phosphorylation. The sequence is that of Ubiquinol-cytochrome c reductase complex assembly factor 4 (UQCC4) from Pongo abelii (Sumatran orangutan).